The sequence spans 671 residues: Probable boron transporter 6 (671 aa).

At 1-37 (MKSEGESGPFQGILRDIEGRRKCYKQDWIRGIKTGIR) the chain is on the cytoplasmic side. The chain crosses the membrane as a helical span at residues 38 to 58 (ILAPTCYIFFASSLPVVAFGE). The Extracellular portion of the chain corresponds to 59-77 (QLSKHTGGALSAVETLAST). A helical transmembrane segment spans residues 78-98 (SICGIIHAIFGGQPLLIVGVA). The Cytoplasmic portion of the chain corresponds to 99–123 (EPTIIMYTYLYSFCISRPDIGRELY). The helical transmembrane segment at 124 to 144 (LAWVAWVCVWTSVLLILLSIF) threads the bilayer. Residues 145 to 157 (NAGTIITRFTRIA) are Extracellular-facing. A helical membrane pass occupies residues 158–178 (GELFGMLIAVLFLQEAIKGLI). The Cytoplasmic portion of the chain corresponds to 179–195 (SEFHAPEIKNQETGKSH). A helical membrane pass occupies residues 196-216 (FLLIYANGLLAVIFSLGLLIT). Topologically, residues 217–235 (ALKSRRAKSWKYGFGWLRS) are extracellular. Residues 236–256 (FIGDYGVPLMVLLWTALSYTV) form a helical membrane-spanning segment. At 257–291 (PSEVLPSVPRRLFCPLPWEPASLYHWTVVKDMGKV) the chain is on the cytoplasmic side. A helical transmembrane segment spans residues 292 to 312 (PIMYILAAFIPGVMIAGLYFF). Residues 313–332 (DHSVASQMAQQKEFNLKNPS) lie on the Extracellular side of the membrane. The helical transmembrane segment at 333 to 353 (AYHYDIFLLGIITLICGLLGL) threads the bilayer. Over 354–469 (PPSNGVLPQA…EQRVSNLLQS (116 aa)) the chain is Cytoplasmic. Residues 470 to 490 (VLVGLTLLAVTVIKMIPSSVL) form a helical membrane-spanning segment. The Extracellular portion of the chain corresponds to 491 to 557 (WGYFAYMAID…QLVYFLLCYG (67 aa)). The chain crosses the membrane as a helical span at residues 558–578 (MTWIPMAGIFFPALFFLLISI). The Cytoplasmic portion of the chain corresponds to 579–671 (REHLLPKLFD…EEKHVTFEPH (93 aa)).

This sequence belongs to the anion exchanger (TC 2.A.31.3) family.

It is found in the membrane. In terms of biological role, probable boron transporter. Boron is essential for maintaining the integrity of plants cell walls. In Arabidopsis thaliana (Mouse-ear cress), this protein is Probable boron transporter 6 (BOR6).